Consider the following 304-residue polypeptide: UDP-3-O-acyl-N-acetylglucosamine deacetylase (304 aa).

His-78, His-237, and Asp-241 together coordinate Zn(2+). Catalysis depends on His-264, which acts as the Proton donor.

The protein belongs to the LpxC family. Zn(2+) is required as a cofactor.

It catalyses the reaction a UDP-3-O-[(3R)-3-hydroxyacyl]-N-acetyl-alpha-D-glucosamine + H2O = a UDP-3-O-[(3R)-3-hydroxyacyl]-alpha-D-glucosamine + acetate. It functions in the pathway glycolipid biosynthesis; lipid IV(A) biosynthesis; lipid IV(A) from (3R)-3-hydroxytetradecanoyl-[acyl-carrier-protein] and UDP-N-acetyl-alpha-D-glucosamine: step 2/6. Catalyzes the hydrolysis of UDP-3-O-myristoyl-N-acetylglucosamine to form UDP-3-O-myristoylglucosamine and acetate, the committed step in lipid A biosynthesis. This chain is UDP-3-O-acyl-N-acetylglucosamine deacetylase, found in Thioalkalivibrio sulfidiphilus (strain HL-EbGR7).